The primary structure comprises 553 residues: Hydroxylamine reductase (553 aa).

[4Fe-4S] cluster is bound by residues C3, C6, C15, and C21. Residues H244, E268, C312, C406, C434, C459, E494, and K496 each contribute to the hybrid [4Fe-2O-2S] cluster site. Cysteine persulfide is present on C406.

The protein belongs to the HCP family. Monomer. [4Fe-4S] cluster is required as a cofactor. The cofactor is hybrid [4Fe-2O-2S] cluster.

It localises to the cytoplasm. It carries out the reaction A + NH4(+) + H2O = hydroxylamine + AH2 + H(+). In terms of biological role, catalyzes the reduction of hydroxylamine to form NH(3) and H(2)O. The protein is Hydroxylamine reductase of Nitratidesulfovibrio vulgaris (strain ATCC 29579 / DSM 644 / CCUG 34227 / NCIMB 8303 / VKM B-1760 / Hildenborough) (Desulfovibrio vulgaris).